The primary structure comprises 293 residues: Aminodeoxychorismate lyase (293 aa).

At K146 the chain carries N6-(pyridoxal phosphate)lysine.

The protein belongs to the class-IV pyridoxal-phosphate-dependent aminotransferase family. In terms of assembly, homodimer. It depends on pyridoxal 5'-phosphate as a cofactor.

The catalysed reaction is 4-amino-4-deoxychorismate = 4-aminobenzoate + pyruvate + H(+). It participates in cofactor biosynthesis; tetrahydrofolate biosynthesis; 4-aminobenzoate from chorismate: step 2/2. Its function is as follows. Involved in the biosynthesis of p-aminobenzoate (PABA), a precursor of tetrahydrofolate. Converts 4-amino-4-deoxychorismate into 4-aminobenzoate (PABA) and pyruvate. This chain is Aminodeoxychorismate lyase, found in Bacillus subtilis (strain 168).